A 728-amino-acid chain; its full sequence is Polyphosphate kinase (728 aa).

An ATP-binding site is contributed by N57. Positions 408 and 438 each coordinate Mg(2+). H468 acts as the Phosphohistidine intermediate in catalysis. Positions 501, 597, and 625 each coordinate ATP. Positions 694–728 (VQRRPASPEQSQSSQAIFTAQAIAETTEDPELRSV) are disordered. Residues 695 to 709 (QRRPASPEQSQSSQA) show a composition bias toward low complexity.

Belongs to the polyphosphate kinase 1 (PPK1) family. Mg(2+) serves as cofactor. Post-translationally, an intermediate of this reaction is the autophosphorylated ppk in which a phosphate is covalently linked to a histidine residue through a N-P bond.

It catalyses the reaction [phosphate](n) + ATP = [phosphate](n+1) + ADP. Catalyzes the reversible transfer of the terminal phosphate of ATP to form a long-chain polyphosphate (polyP). The protein is Polyphosphate kinase of Synechocystis sp. (strain ATCC 27184 / PCC 6803 / Kazusa).